Here is a 158-residue protein sequence, read N- to C-terminus: Large ribosomal subunit protein uL11 (158 aa).

A disordered region spans residues 1–21 (MAQSVKTMVEGGKATTGPPIG).

This sequence belongs to the universal ribosomal protein uL11 family. Part of the ribosomal stalk of the 50S ribosomal subunit. Interacts with L10 and the large rRNA to form the base of the stalk. L10 forms an elongated spine to which L12 dimers bind in a sequential fashion forming a multimeric L10(L12)X complex.

In terms of biological role, forms part of the ribosomal stalk which helps the ribosome interact with GTP-bound translation factors. The protein is Large ribosomal subunit protein uL11 of Thermoplasma volcanium (strain ATCC 51530 / DSM 4299 / JCM 9571 / NBRC 15438 / GSS1).